A 128-amino-acid chain; its full sequence is Mini-ribonuclease 3 (128 aa).

Residue Asp-17 is part of the active site.

The protein belongs to the MrnC RNase family. As to quaternary structure, homodimer. The cofactor is Mg(2+).

The protein resides in the cytoplasm. Functionally, involved in correct processing of both the 5' and 3' ends of 23S rRNA precursor. Processes 30S rRNA precursor transcript even in absence of ribonuclease 3 (Rnc); Rnc processes 30S rRNA into smaller rRNA precursors. This is Mini-ribonuclease 3 from Streptococcus pneumoniae (strain ATCC BAA-255 / R6).